A 504-amino-acid chain; its full sequence is Cytochrome P450 3A16 (504 aa).

Position 443 (cysteine 443) interacts with heme.

It belongs to the cytochrome P450 family. It depends on heme as a cofactor.

Its subcellular location is the endoplasmic reticulum membrane. The protein localises to the microsome membrane. The enzyme catalyses an organic molecule + reduced [NADPH--hemoprotein reductase] + O2 = an alcohol + oxidized [NADPH--hemoprotein reductase] + H2O + H(+). Its function is as follows. Cytochromes P450 are a group of heme-thiolate monooxygenases. In liver microsomes, this enzyme is involved in an NADPH-dependent electron transport pathway. It oxidizes a variety of structurally unrelated compounds, including steroids, fatty acids, and xenobiotics. The sequence is that of Cytochrome P450 3A16 (Cyp3a16) from Mus musculus (Mouse).